Consider the following 277-residue polypeptide: MKIQLASSYGFCFGVKRAIKIAEEHQGSKTYGPLIHNKDEINRLKEGFDIGLAEKLDDVTPEDSVVIRTHGIPKDELSQLKAQENPIIDATCPYVTTPQNIVANMSEKGYSIVIFGDKEHPEIKGVVSYAKDLRNAFIVKHEDELKGLPILSKVAVVAQTTRKPEDFLKIVNALILNHKEVRVFNTICNATFENQDAAAELAKDADVMVVIGGKHSSNTKQLHSICKSYCDDSYLIENEAELEPKWFEGKKLCGISAGASTPDWIVQNVIDKIEALK.

Cys-12 contacts [4Fe-4S] cluster. Residues His-36 and His-70 each coordinate (2E)-4-hydroxy-3-methylbut-2-enyl diphosphate. Dimethylallyl diphosphate-binding residues include His-36 and His-70. Residues His-36 and His-70 each coordinate isopentenyl diphosphate. Cys-92 contributes to the [4Fe-4S] cluster binding site. Position 120 (His-120) interacts with (2E)-4-hydroxy-3-methylbut-2-enyl diphosphate. Dimethylallyl diphosphate is bound at residue His-120. His-120 provides a ligand contact to isopentenyl diphosphate. Glu-122 serves as the catalytic Proton donor. Thr-160 serves as a coordination point for (2E)-4-hydroxy-3-methylbut-2-enyl diphosphate. Cys-188 serves as a coordination point for [4Fe-4S] cluster. Positions 216, 217, 218, and 260 each coordinate (2E)-4-hydroxy-3-methylbut-2-enyl diphosphate. Dimethylallyl diphosphate is bound by residues Ser-216, Ser-217, Asn-218, and Ser-260. 4 residues coordinate isopentenyl diphosphate: Ser-216, Ser-217, Asn-218, and Ser-260.

It belongs to the IspH family. [4Fe-4S] cluster is required as a cofactor.

The enzyme catalyses isopentenyl diphosphate + 2 oxidized [2Fe-2S]-[ferredoxin] + H2O = (2E)-4-hydroxy-3-methylbut-2-enyl diphosphate + 2 reduced [2Fe-2S]-[ferredoxin] + 2 H(+). It carries out the reaction dimethylallyl diphosphate + 2 oxidized [2Fe-2S]-[ferredoxin] + H2O = (2E)-4-hydroxy-3-methylbut-2-enyl diphosphate + 2 reduced [2Fe-2S]-[ferredoxin] + 2 H(+). Its pathway is isoprenoid biosynthesis; dimethylallyl diphosphate biosynthesis; dimethylallyl diphosphate from (2E)-4-hydroxy-3-methylbutenyl diphosphate: step 1/1. The protein operates within isoprenoid biosynthesis; isopentenyl diphosphate biosynthesis via DXP pathway; isopentenyl diphosphate from 1-deoxy-D-xylulose 5-phosphate: step 6/6. Catalyzes the conversion of 1-hydroxy-2-methyl-2-(E)-butenyl 4-diphosphate (HMBPP) into a mixture of isopentenyl diphosphate (IPP) and dimethylallyl diphosphate (DMAPP). Acts in the terminal step of the DOXP/MEP pathway for isoprenoid precursor biosynthesis. The sequence is that of 4-hydroxy-3-methylbut-2-enyl diphosphate reductase from Sulfurovum sp. (strain NBC37-1).